Reading from the N-terminus, the 439-residue chain is Cobyrinate a,c-diamide synthase (439 aa).

Residues 214–235 (ETARAPPEVATTERNTGDSPAD) form a disordered region. The GATase cobBQ-type domain maps to 237-428 (RVAVAQDSAF…CHCHGESGAF (192 aa)). The Nucleophile role is filled by Cys-317.

The protein belongs to the CobB/CbiA family. It depends on Mg(2+) as a cofactor.

It carries out the reaction cob(II)yrinate + 2 L-glutamine + 2 ATP + 2 H2O = cob(II)yrinate a,c diamide + 2 L-glutamate + 2 ADP + 2 phosphate + 2 H(+). Its pathway is cofactor biosynthesis; adenosylcobalamin biosynthesis; cob(II)yrinate a,c-diamide from sirohydrochlorin (anaerobic route): step 10/10. Functionally, catalyzes the ATP-dependent amidation of the two carboxylate groups at positions a and c of cobyrinate, using either L-glutamine or ammonia as the nitrogen source. This chain is Cobyrinate a,c-diamide synthase, found in Haloarcula marismortui (strain ATCC 43049 / DSM 3752 / JCM 8966 / VKM B-1809) (Halobacterium marismortui).